We begin with the raw amino-acid sequence, 237 residues long: Purine nucleoside phosphorylase DeoD-type (237 aa).

Residue histidine 4 participates in a purine D-ribonucleoside binding. Phosphate is bound by residues glycine 20, arginine 24, arginine 43, and 87-90 (RVGT). A purine D-ribonucleoside is bound by residues 179 to 181 (EME) and 203 to 204 (SD). The active-site Proton donor is aspartate 204.

The protein belongs to the PNP/UDP phosphorylase family. In terms of assembly, homohexamer; trimer of homodimers.

The catalysed reaction is a purine D-ribonucleoside + phosphate = a purine nucleobase + alpha-D-ribose 1-phosphate. It catalyses the reaction a purine 2'-deoxy-D-ribonucleoside + phosphate = a purine nucleobase + 2-deoxy-alpha-D-ribose 1-phosphate. In terms of biological role, catalyzes the reversible phosphorolytic breakdown of the N-glycosidic bond in the beta-(deoxy)ribonucleoside molecules, with the formation of the corresponding free purine bases and pentose-1-phosphate. The polypeptide is Purine nucleoside phosphorylase DeoD-type (Streptococcus uberis (strain ATCC BAA-854 / 0140J)).